The sequence spans 527 residues: Nucleobase-ascorbate transporter LPE1 (527 aa).

A run of 12 helical transmembrane segments spans residues 43-63 (LVML…MGGG), 68-88 (AIVI…QVHF), 92-112 (LPAV…IILS), 132-152 (LQGA…FGIW), 163-183 (AAVP…FPGV), 189-209 (VGLP…HLFA), 219-239 (AVLV…AAGA), 284-304 (FAML…LIAV), 361-383 (VIKI…AVLA), 387-409 (LPIF…FSLL), 427-447 (LFLG…FGFG), and 458-478 (VMVN…AYLL).

This sequence belongs to the nucleobase:cation symporter-2 (NCS2) (TC 2.A.40) family. Highly expressed in roots.

It is found in the membrane. Its activity is regulated as follows. Inhibited by excess of xanthin, uric acid and ascorbic acid, and by 100 um N,N-dicyclohexylcarbodiimide and 30 um carbonyl cyanide m-chlorophenyl-hydrazone. Its function is as follows. High affinity uric acid-xanthine transporter in A.nidulans. Binds, but cannot transport ascorbic acid. The protein is Nucleobase-ascorbate transporter LPE1 (LPE1) of Zea mays (Maize).